We begin with the raw amino-acid sequence, 314 residues long: Formimidoylglutamase (314 aa).

The Mn(2+) site is built by histidine 127, aspartate 151, histidine 153, aspartate 155, aspartate 239, and aspartate 241.

It belongs to the arginase family. The cofactor is Mn(2+).

It catalyses the reaction N-formimidoyl-L-glutamate + H2O = formamide + L-glutamate. The protein operates within amino-acid degradation; L-histidine degradation into L-glutamate; L-glutamate from N-formimidoyl-L-glutamate (hydrolase route): step 1/1. Its function is as follows. Catalyzes the conversion of N-formimidoyl-L-glutamate to L-glutamate and formamide. In Corynebacterium efficiens (strain DSM 44549 / YS-314 / AJ 12310 / JCM 11189 / NBRC 100395), this protein is Formimidoylglutamase.